A 1206-amino-acid chain; its full sequence is DNA polymerase (1206 aa).

This sequence belongs to the DNA polymerase type-B family.

It catalyses the reaction DNA(n) + a 2'-deoxyribonucleoside 5'-triphosphate = DNA(n+1) + diphosphate. The chain is DNA polymerase (dpo) from Pyramimonas orientalis virus (PoV01).